A 218-amino-acid polypeptide reads, in one-letter code: 7-cyano-7-deazaguanine synthase (218 aa).

9–19 (FSGGMDSFTVL) contacts ATP. The Zn(2+) site is built by Cys-185, Cys-193, Cys-196, and Cys-199.

The protein belongs to the QueC family. The cofactor is Zn(2+).

It carries out the reaction 7-carboxy-7-deazaguanine + NH4(+) + ATP = 7-cyano-7-deazaguanine + ADP + phosphate + H2O + H(+). It functions in the pathway purine metabolism; 7-cyano-7-deazaguanine biosynthesis. Its function is as follows. Catalyzes the ATP-dependent conversion of 7-carboxy-7-deazaguanine (CDG) to 7-cyano-7-deazaguanine (preQ(0)). This is 7-cyano-7-deazaguanine synthase from Pseudoalteromonas atlantica (strain T6c / ATCC BAA-1087).